Here is a 710-residue protein sequence, read N- to C-terminus: Pentatricopeptide repeat-containing protein At5g39680 (710 aa).

S2 carries the post-translational modification N-acetylserine. 14 PPR repeats span residues 35-64 (NELL…NQSS), 68-98 (DAYQ…MPER), 99-133 (NVVS…GESR), 135-169 (NEFV…GLIS), 170-200 (HEFV…LPYC), 201-235 (DLSV…DFVW), 236-270 (NNLT…GFNA), 271-301 (EVEA…THAQ), 302-336 (NIFL…EVPP), 337-371 (NEYT…GYRN), 372-402 (HVMV…MTFR), 403-437 (DIVT…GEIP), 438-473 (NRIT…DVQP), and 474-504 (DIQH…APIE). Residues 509–584 (AWRTLLNACY…EPGVSWIGIR (76 aa)) form a type E motif region. The tract at residues 585 to 615 (NQTHVFLAEDNQHPEITLIYAKVKEVMSKIK) is type E(+) motif. Residues 616 to 710 (PLGYSPDVAG…DGQCSCCDYW (95 aa)) are type DYW motif.

It belongs to the PPR family. PCMP-H subfamily.

This Arabidopsis thaliana (Mouse-ear cress) protein is Pentatricopeptide repeat-containing protein At5g39680 (EMB2744).